The following is a 431-amino-acid chain: PHD finger-containing protein 1 (431 aa).

The PHD-type zinc-finger motif lies at 7-59 (GPVCQTCGDIGFEEALVFCDSCMFESIHRYCLGITPIPFTEYITWICEDCDNS). C10, C13, C25, C28, H34, C37, C53, and C56 together coordinate Zn(2+). The interval 125–221 (EAADSSSVPD…QESSDSRKPH (97 aa)) is disordered. The span at 128–139 (DSSSVPDHSSCT) shows a compositional bias: polar residues. Residues 160 to 171 (KKKKKKKKKKSI) are compositionally biased toward basic residues. Over residues 191–202 (VVEPVEVSSSSP) the composition is skewed to low complexity. A compositionally biased stretch (basic and acidic residues) spans 205 to 221 (ETMESKRQESSDSRKPH).

In terms of assembly, interacts directly with AIPP3/BDT1.

In terms of biological role, together with AIPP3/BDT1, cooperates to form a BAH-PHD bivalent histone reader complex able to read histone H3 lysine 27 trimethylation (H3K27me3) histone marks in order to regulate transcription, especially to prevent early flowering; promotes AIPP3/BDT1 binding to H3K27me3. This is PHD finger-containing protein 1 from Arabidopsis thaliana (Mouse-ear cress).